A 167-amino-acid polypeptide reads, in one-letter code: MDAAIGKVFDSVSDFFSGAASASADEFPLCDSDIISGCEKELAEAQDEGRKKECIMRLSWALVHSKMPSDIQRGIAMLEALVVNDTSAMKLREKLYLLALGYYRSGDFSRSRDCIERCLEVEPESGQAQALKKAIEDRIVKDGVIGVGIAVTAVGVVAGIAAAILRS.

Residues 92–125 (REKLYLLALGYYRSGDFSRSRDCIERCLEVEPES) form a TPR repeat. A helical transmembrane segment spans residues 144 to 164 (VIGVGIAVTAVGVVAGIAAAI).

Belongs to the FIS1 family. As to quaternary structure, interacts with PEX11A, PEX11B, PEX11C, PEX11D and PEX11E.

The protein localises to the mitochondrion outer membrane. Its subcellular location is the peroxisome membrane. Functionally, component of the peroxisomal and mitochondrial division machineries. Plays a role in promoting the fission of mitochondria and peroxisomes. In association with PEX11C, PEX11D, PEX11E and DRP3A, is involved in cell cycle-associated constitutive self-replication of preexisting peroxisomes. This chain is Mitochondrial fission 1 protein B (FIS1B), found in Arabidopsis thaliana (Mouse-ear cress).